We begin with the raw amino-acid sequence, 327 residues long: Tagatose 1,6-diphosphate aldolase 2 (327 aa).

It belongs to the aldolase LacD family.

The enzyme catalyses D-tagatofuranose 1,6-bisphosphate = D-glyceraldehyde 3-phosphate + dihydroxyacetone phosphate. It participates in carbohydrate metabolism; D-tagatose 6-phosphate degradation; D-glyceraldehyde 3-phosphate and glycerone phosphate from D-tagatose 6-phosphate: step 2/2. The protein is Tagatose 1,6-diphosphate aldolase 2 (lacD2) of Streptococcus pyogenes serotype M1.